The chain runs to 180 residues: NADH-quinone oxidoreductase subunit I 1 (180 aa).

4Fe-4S ferredoxin-type domains lie at Leu50–Thr80 and Glu90–Asp119. Cys60, Cys63, Cys66, Cys70, Cys99, Cys102, Cys105, and Cys109 together coordinate [4Fe-4S] cluster.

The protein belongs to the complex I 23 kDa subunit family. In terms of assembly, NDH-1 is composed of 14 different subunits. Subunits NuoA, H, J, K, L, M, N constitute the membrane sector of the complex. Requires [4Fe-4S] cluster as cofactor.

It is found in the cell inner membrane. It carries out the reaction a quinone + NADH + 5 H(+)(in) = a quinol + NAD(+) + 4 H(+)(out). In terms of biological role, NDH-1 shuttles electrons from NADH, via FMN and iron-sulfur (Fe-S) centers, to quinones in the respiratory chain. The immediate electron acceptor for the enzyme in this species is believed to be ubiquinone. Couples the redox reaction to proton translocation (for every two electrons transferred, four hydrogen ions are translocated across the cytoplasmic membrane), and thus conserves the redox energy in a proton gradient. In Nitrosococcus oceani (strain ATCC 19707 / BCRC 17464 / JCM 30415 / NCIMB 11848 / C-107), this protein is NADH-quinone oxidoreductase subunit I 1.